A 370-amino-acid polypeptide reads, in one-letter code: Putative agmatine deiminase (370 aa).

The active-site Amidino-cysteine intermediate is the C361.

Belongs to the agmatine deiminase family.

The catalysed reaction is agmatine + H2O = N-carbamoylputrescine + NH4(+). The sequence is that of Putative agmatine deiminase from Shewanella sp. (strain MR-7).